The following is a 92-amino-acid chain: Small ribosomal subunit protein uS19 (92 aa).

This sequence belongs to the universal ribosomal protein uS19 family.

Its function is as follows. Protein S19 forms a complex with S13 that binds strongly to the 16S ribosomal RNA. The sequence is that of Small ribosomal subunit protein uS19 from Methylobacterium radiotolerans (strain ATCC 27329 / DSM 1819 / JCM 2831 / NBRC 15690 / NCIMB 10815 / 0-1).